Reading from the N-terminus, the 906-residue chain is Protein translocase subunit SecA (906 aa).

ATP contacts are provided by residues Gln-89, 107 to 111, and Asp-502; that span reads GEGKT. Cys-890, Cys-892, Cys-901, and His-902 together coordinate Zn(2+).

This sequence belongs to the SecA family. Monomer and homodimer. Part of the essential Sec protein translocation apparatus which comprises SecA, SecYEG and auxiliary proteins SecDF-YajC and YidC. The cofactor is Zn(2+).

It localises to the cell inner membrane. It is found in the cytoplasm. It catalyses the reaction ATP + H2O + cellular proteinSide 1 = ADP + phosphate + cellular proteinSide 2.. Part of the Sec protein translocase complex. Interacts with the SecYEG preprotein conducting channel. Has a central role in coupling the hydrolysis of ATP to the transfer of proteins into and across the cell membrane, serving both as a receptor for the preprotein-SecB complex and as an ATP-driven molecular motor driving the stepwise translocation of polypeptide chains across the membrane. The sequence is that of Protein translocase subunit SecA from Brucella canis (strain ATCC 23365 / NCTC 10854 / RM-666).